A 533-amino-acid polypeptide reads, in one-letter code: Fimbrial subunit type 1 (533 aa).

A signal peptide spans 1–30; the sequence is MHSLNTRRGLGLAAAMTLAAGALVAPTGAA. The LPXTG sorting signal motif lies at 496-500; the sequence is LPLTG. Position 499 is a pentaglycyl murein peptidoglycan amidated threonine (Thr-499). Residues 500-533 constitute a propeptide, removed by sortase; the sequence is GANGVIFLTIAGALLVAGGAVVAYANKRRHVAKH.

Its subcellular location is the secreted. The protein resides in the cell wall. It is found in the fimbrium. Major fimbrial subunit of A.viscosus. The polypeptide is Fimbrial subunit type 1 (Actinomyces viscosus).